The chain runs to 407 residues: Argininosuccinate synthase (407 aa).

Residues A12–S20 and A39 each bind ATP. Residues Y92 and S97 each coordinate L-citrulline. G122 is a binding site for ATP. L-aspartate contacts are provided by T124, N128, and D129. An L-citrulline-binding site is contributed by N128. Residues R132, S182, S191, E267, and Y279 each coordinate L-citrulline.

Belongs to the argininosuccinate synthase family. Type 1 subfamily. As to quaternary structure, homotetramer.

It is found in the cytoplasm. It carries out the reaction L-citrulline + L-aspartate + ATP = 2-(N(omega)-L-arginino)succinate + AMP + diphosphate + H(+). Its pathway is amino-acid biosynthesis; L-arginine biosynthesis; L-arginine from L-ornithine and carbamoyl phosphate: step 2/3. This is Argininosuccinate synthase from Campylobacter fetus subsp. fetus (strain 82-40).